The following is a 220-amino-acid chain: FMN-dependent NADH:quinone oxidoreductase (220 aa).

Residues serine 10, serine 17–serine 19, and serine 136–glycine 139 contribute to the FMN site. The interval histidine 200–arginine 220 is disordered.

The protein belongs to the azoreductase type 1 family. Homodimer. FMN serves as cofactor.

It carries out the reaction 2 a quinone + NADH + H(+) = 2 a 1,4-benzosemiquinone + NAD(+). The catalysed reaction is N,N-dimethyl-1,4-phenylenediamine + anthranilate + 2 NAD(+) = 2-(4-dimethylaminophenyl)diazenylbenzoate + 2 NADH + 2 H(+). In terms of biological role, quinone reductase that provides resistance to thiol-specific stress caused by electrophilic quinones. Its function is as follows. Also exhibits azoreductase activity. Catalyzes the reductive cleavage of the azo bond in aromatic azo compounds to the corresponding amines. The polypeptide is FMN-dependent NADH:quinone oxidoreductase (Streptomyces coelicolor (strain ATCC BAA-471 / A3(2) / M145)).